Here is a 160-residue protein sequence, read N- to C-terminus: Small ribosomal subunit protein uS7 (160 aa).

Belongs to the universal ribosomal protein uS7 family. As to quaternary structure, part of the 30S ribosomal subunit. Contacts proteins S9 and S11.

In terms of biological role, one of the primary rRNA binding proteins, it binds directly to 16S rRNA where it nucleates assembly of the head domain of the 30S subunit. Is located at the subunit interface close to the decoding center, probably blocks exit of the E-site tRNA. The chain is Small ribosomal subunit protein uS7 from Rickettsia rickettsii (strain Iowa).